The following is a 302-amino-acid chain: Probable 2-(5''-triphosphoribosyl)-3'-dephosphocoenzyme-A synthase 1 (302 aa).

This sequence belongs to the CitG/MdcB family.

The catalysed reaction is 3'-dephospho-CoA + ATP = 2'-(5''-triphospho-alpha-D-ribosyl)-3'-dephospho-CoA + adenine. The polypeptide is Probable 2-(5''-triphosphoribosyl)-3'-dephosphocoenzyme-A synthase 1 (Salmonella paratyphi A (strain ATCC 9150 / SARB42)).